A 388-amino-acid polypeptide reads, in one-letter code: Succinate--CoA ligase [ADP-forming] subunit beta (388 aa).

Residues 9–244 (KQIFAEYQLP…PSQEDPREAL (236 aa)) enclose the ATP-grasp domain. Residues K46, 53–55 (GRG), E99, S102, and E107 each bind ATP. Mg(2+) contacts are provided by N199 and D213. Substrate is bound by residues N264 and 321 to 323 (GIV).

This sequence belongs to the succinate/malate CoA ligase beta subunit family. Heterotetramer of two alpha and two beta subunits. Mg(2+) serves as cofactor.

It catalyses the reaction succinate + ATP + CoA = succinyl-CoA + ADP + phosphate. It carries out the reaction GTP + succinate + CoA = succinyl-CoA + GDP + phosphate. It functions in the pathway carbohydrate metabolism; tricarboxylic acid cycle; succinate from succinyl-CoA (ligase route): step 1/1. Functionally, succinyl-CoA synthetase functions in the citric acid cycle (TCA), coupling the hydrolysis of succinyl-CoA to the synthesis of either ATP or GTP and thus represents the only step of substrate-level phosphorylation in the TCA. The beta subunit provides nucleotide specificity of the enzyme and binds the substrate succinate, while the binding sites for coenzyme A and phosphate are found in the alpha subunit. The chain is Succinate--CoA ligase [ADP-forming] subunit beta from Pasteurella multocida (strain Pm70).